The primary structure comprises 881 residues: Alanine--tRNA ligase (881 aa).

The Zn(2+) site is built by His566, His570, Cys668, and His672.

This sequence belongs to the class-II aminoacyl-tRNA synthetase family. Zn(2+) is required as a cofactor.

It is found in the cytoplasm. It catalyses the reaction tRNA(Ala) + L-alanine + ATP = L-alanyl-tRNA(Ala) + AMP + diphosphate. Functionally, catalyzes the attachment of alanine to tRNA(Ala) in a two-step reaction: alanine is first activated by ATP to form Ala-AMP and then transferred to the acceptor end of tRNA(Ala). Also edits incorrectly charged Ser-tRNA(Ala) and Gly-tRNA(Ala) via its editing domain. The polypeptide is Alanine--tRNA ligase (Frankia casuarinae (strain DSM 45818 / CECT 9043 / HFP020203 / CcI3)).